A 632-amino-acid chain; its full sequence is Cytosolic Fe-S cluster assembly factor NAR1 (632 aa).

Cysteine 20 contributes to the [4Fe-4S] cluster binding site. The disordered stretch occupies residues 27 to 53 (LPAKPEDSSNPYEVTTEDKAAASQPPP). Residues cysteine 62, cysteine 65, and cysteine 68 each contribute to the [4Fe-4S] cluster site. Disordered regions lie at residues 99-119 (WQTQ…NGHS) and 210-231 (LSPE…DTTP). Residues 101–119 (TQNGTNGTNGTNGTTNGHS) are compositionally biased toward low complexity. Over residues 211-221 (SPETSNPSTKP) the composition is skewed to polar residues. 4 residues coordinate [4Fe-4S] cluster: cysteine 240, cysteine 295, cysteine 486, and cysteine 490. The tract at residues 542–573 (GSDSEEEKVDQDGDQNMQDATTNGHTSEPDIV) is disordered. Residues 544–554 (DSEEEKVDQDG) show a composition bias toward acidic residues. Polar residues predominate over residues 555–567 (DQNMQDATTNGHT).

The protein belongs to the NARF family.

In terms of biological role, component of the cytosolic Fe/S protein assembly machinery. Required for maturation of extramitochondrial Fe/S proteins. May play a role in the transfer of pre-assembled Fe/S clusters to target apoproteins. The sequence is that of Cytosolic Fe-S cluster assembly factor NAR1 (NAR1) from Phaeosphaeria nodorum (strain SN15 / ATCC MYA-4574 / FGSC 10173) (Glume blotch fungus).